Reading from the N-terminus, the 166-residue chain is Peroxynitrite isomerase Rv2717c (166 aa).

Residues 28–34 (GTWRGQG) carry the GXWXGXG motif. Thr-40 and His-158 together coordinate heme b.

Belongs to the nitrobindin family. As to quaternary structure, homodimer. Heme b serves as cofactor.

The protein localises to the cytoplasm. It catalyses the reaction peroxynitrite = nitrate. It functions in the pathway nitrogen metabolism. In terms of biological role, heme-binding protein able to scavenge peroxynitrite and to protect free L-tyrosine against peroxynitrite-mediated nitration, by acting as a peroxynitrite isomerase that converts peroxynitrite to nitrate. Therefore, this protein likely plays a role in peroxynitrite sensing and in the detoxification of reactive nitrogen and oxygen species (RNS and ROS, respectively). Is able to bind nitric oxide (NO) in vitro, but may act as a sensor of peroxynitrite levels in vivo. The polypeptide is Peroxynitrite isomerase Rv2717c (Arabidopsis thaliana (Mouse-ear cress)).